We begin with the raw amino-acid sequence, 123 residues long: Large ribosomal subunit protein uL14 (123 aa).

The protein belongs to the universal ribosomal protein uL14 family. In terms of assembly, part of the 50S ribosomal subunit. Forms a cluster with proteins L3 and L19. In the 70S ribosome, L14 and L19 interact and together make contacts with the 16S rRNA in bridges B5 and B8.

In terms of biological role, binds to 23S rRNA. Forms part of two intersubunit bridges in the 70S ribosome. The polypeptide is Large ribosomal subunit protein uL14 (Serratia proteamaculans (strain 568)).